We begin with the raw amino-acid sequence, 234 residues long: Phosphoribosylaminoimidazole-succinocarboxamide synthase (234 aa).

Belongs to the SAICAR synthetase family.

The enzyme catalyses 5-amino-1-(5-phospho-D-ribosyl)imidazole-4-carboxylate + L-aspartate + ATP = (2S)-2-[5-amino-1-(5-phospho-beta-D-ribosyl)imidazole-4-carboxamido]succinate + ADP + phosphate + 2 H(+). The protein operates within purine metabolism; IMP biosynthesis via de novo pathway; 5-amino-1-(5-phospho-D-ribosyl)imidazole-4-carboxamide from 5-amino-1-(5-phospho-D-ribosyl)imidazole-4-carboxylate: step 1/2. The polypeptide is Phosphoribosylaminoimidazole-succinocarboxamide synthase (Streptococcus pyogenes serotype M1).